Reading from the N-terminus, the 718-residue chain is Protein ENHANCED DISEASE RESISTANCE 2 (718 aa).

One can recognise a PH domain in the interval 3 to 110 (KVVYEGWMVR…WKEKIESVID (108 aa)). Residues 134-174 (TGRTASSSDHESQFSAAEDEEDSRRSLMRRTTIGNGPPESV) form a disordered region. In terms of domain architecture, START spans 180-392 (EFDAELANQN…VAGLREWFSQ (213 aa)). The interval 437-483 (RNSLLMDEDSDDDDEFQIAESEQEPETSKPETDVKRPEEEPAHNIDL) is disordered. The span at 442–461 (MDEDSDDDDEFQIAESEQEP) shows a compositional bias: acidic residues. Residues 462 to 479 (ETSKPETDVKRPEEEPAH) show a composition bias toward basic and acidic residues. Residues 664-684 (GVLGLVIGVITSLVVEMAFLV) traverse the membrane as a helical segment.

Expressed ubiquitously in all tissues and organs, including leaves, roots, flowers, stems and siliques.

Its subcellular location is the endoplasmic reticulum membrane. It localises to the cell membrane. The protein resides in the endosome membrane. Negative regulator of the salicylic acid- (SA-) mediated resistance to pathogens, including the biotrophic powdery mildew pathogens Golovinomyces cichoracearum and Blumeria graminis, and the downy mildew pathogen Hyaloperonospora parasitica, probably by limiting the initiation of cell death and the establishment of the hypersensitive response (HR). Prevents ethylene-induced senescence. Binds to phosphatidylinositol-4-phosphate (PtdIns(4)P) in vitro. The polypeptide is Protein ENHANCED DISEASE RESISTANCE 2 (EDR2) (Arabidopsis thaliana (Mouse-ear cress)).